The chain runs to 64 residues: Large ribosomal subunit protein bL35 (64 aa).

Positions 1-55 (MPKMKSNKSVAARFKLTGSGQLKRTRPGKRHKLSKRSSQQKRNLSKQPLVDQGQV) are disordered. A compositionally biased stretch (basic residues) spans 23-39 (KRTRPGKRHKLSKRSSQ).

Belongs to the bacterial ribosomal protein bL35 family.

In Chlamydia muridarum (strain MoPn / Nigg), this protein is Large ribosomal subunit protein bL35.